Here is a 441-residue protein sequence, read N- to C-terminus: 3-phosphoshikimate 1-carboxyvinyltransferase (441 aa).

Residues 1 to 21 are disordered; sequence MSANGPSHPARELKAGGSLSG. Residues K29, S30, and R34 each contribute to the 3-phosphoshikimate site. Residue K29 participates in phosphoenolpyruvate binding. Positions 103 and 132 each coordinate phosphoenolpyruvate. Residues S177, Q179, D328, and K355 each contribute to the 3-phosphoshikimate site. Q179 lines the phosphoenolpyruvate pocket. The active-site Proton acceptor is the D328. Residues R359 and R401 each contribute to the phosphoenolpyruvate site.

It belongs to the EPSP synthase family. In terms of assembly, monomer.

The protein resides in the cytoplasm. The catalysed reaction is 3-phosphoshikimate + phosphoenolpyruvate = 5-O-(1-carboxyvinyl)-3-phosphoshikimate + phosphate. It functions in the pathway metabolic intermediate biosynthesis; chorismate biosynthesis; chorismate from D-erythrose 4-phosphate and phosphoenolpyruvate: step 6/7. Catalyzes the transfer of the enolpyruvyl moiety of phosphoenolpyruvate (PEP) to the 5-hydroxyl of shikimate-3-phosphate (S3P) to produce enolpyruvyl shikimate-3-phosphate and inorganic phosphate. In Parasynechococcus marenigrum (strain WH8102), this protein is 3-phosphoshikimate 1-carboxyvinyltransferase.